We begin with the raw amino-acid sequence, 636 residues long: Chaperone protein DnaK (636 aa).

Residue T196 is modified to Phosphothreonine; by autocatalysis. A disordered region spans residues 591–636 (LAEAMYKSSSQPGAQEAPPTDGQPKPDEKGKDNVVDAEFVDVDDKK). Residues 614–624 (PKPDEKGKDNV) show a composition bias toward basic and acidic residues.

The protein belongs to the heat shock protein 70 family.

Functionally, acts as a chaperone. This is Chaperone protein DnaK from Solibacter usitatus (strain Ellin6076).